Here is a 449-residue protein sequence, read N- to C-terminus: Uridine-cytidine kinase C (449 aa).

58-65 (GPSGAGKT) lines the ATP pocket. Residues 235–401 (NPIYILKSVK…QKSYIELYQD (167 aa)) enclose the CYTH domain.

Belongs to the uridine kinase family.

It catalyses the reaction uridine + ATP = UMP + ADP + H(+). The catalysed reaction is cytidine + ATP = CMP + ADP + H(+). It functions in the pathway pyrimidine metabolism; CTP biosynthesis via salvage pathway; CTP from cytidine: step 1/3. Its pathway is pyrimidine metabolism; UMP biosynthesis via salvage pathway; UMP from uridine: step 1/1. Catalyzes the conversion of uridine into uridine monophosphate and cytidine into cytidine monophosphate in the pyrimidine salvage pathway. This Dictyostelium discoideum (Social amoeba) protein is Uridine-cytidine kinase C (udkC).